Consider the following 512-residue polypeptide: Keratin, type I cytoskeletal 24 (512 aa).

The tract at residues 1–21 (MFCSAQKGSCSSRVSSSGAVG) is disordered. Residues 1-140 (MFCSAQKGSC…GYDGGLLSGS (140 aa)) form a head region. The segment covering 8 to 21 (GSCSSRVSSSGAVG) has biased composition (low complexity). The segment at 141 to 176 (EKQTMQDLNDRLANYLDKVRALEEANTDLECKIKDW) is coil 1A. In terms of domain architecture, IF rod spans 141 to 455 (EKQTMQDLND…RLLNGDGGGC (315 aa)). The linker 1 stretch occupies residues 177–197 (YGKHGSVKGGSGRDYSQYYSI). Residues 198-289 (IEDLKKQILS…KNHEEEMKCM (92 aa)) are coil 1B. Positions 290-312 (QGSSGGDVTVEMNAAPGVDLTKL) are linker 12. Positions 313–451 (LNDMRAQYEA…ETYRRLLNGD (139 aa)) are coil 2. Residues 452-512 (GGGCDYRNLV…VSNISEVKIK (61 aa)) form a tail region.

Belongs to the intermediate filament family. In terms of assembly, heterotetramer of two type I and two type II keratins.

The chain is Keratin, type I cytoskeletal 24 (Krt24) from Mus musculus (Mouse).